The following is a 114-amino-acid chain: UPF0212 protein UNCMA_00570 (114 aa).

This sequence belongs to the UPF0212 family.

This Methanocella arvoryzae (strain DSM 22066 / NBRC 105507 / MRE50) protein is UPF0212 protein UNCMA_00570.